A 488-amino-acid chain; its full sequence is Cobyric acid synthase (488 aa).

The GATase cobBQ-type domain occupies 248–441 (VLRVVVPALP…VHGLFDAPDA (194 aa)). Residue C328 is the Nucleophile of the active site. H433 is a catalytic residue.

It belongs to the CobB/CobQ family. CobQ subfamily.

The protein operates within cofactor biosynthesis; adenosylcobalamin biosynthesis. In terms of biological role, catalyzes amidations at positions B, D, E, and G on adenosylcobyrinic A,C-diamide. NH(2) groups are provided by glutamine, and one molecule of ATP is hydrogenolyzed for each amidation. The sequence is that of Cobyric acid synthase from Burkholderia ambifaria (strain ATCC BAA-244 / DSM 16087 / CCUG 44356 / LMG 19182 / AMMD) (Burkholderia cepacia (strain AMMD)).